The following is a 259-amino-acid chain: Ribosomal RNA small subunit methyltransferase A (259 aa).

S-adenosyl-L-methionine is bound by residues Asn15, Leu17, Gly41, Glu62, Asp86, and Asn105.

Belongs to the class I-like SAM-binding methyltransferase superfamily. rRNA adenine N(6)-methyltransferase family. RsmA subfamily.

It localises to the cytoplasm. The enzyme catalyses adenosine(1518)/adenosine(1519) in 16S rRNA + 4 S-adenosyl-L-methionine = N(6)-dimethyladenosine(1518)/N(6)-dimethyladenosine(1519) in 16S rRNA + 4 S-adenosyl-L-homocysteine + 4 H(+). Functionally, specifically dimethylates two adjacent adenosines (A1518 and A1519) in the loop of a conserved hairpin near the 3'-end of 16S rRNA in the 30S particle. May play a critical role in biogenesis of 30S subunits. In Mycoplasmopsis synoviae (strain 53) (Mycoplasma synoviae), this protein is Ribosomal RNA small subunit methyltransferase A.